Reading from the N-terminus, the 150-residue chain is NADH-quinone oxidoreductase subunit A (150 aa).

3 consecutive transmembrane segments (helical) span residues 14–34 (FAVF…GAFF), 66–86 (FYLV…LYAW), and 96–116 (IGFI…VYLV).

Belongs to the complex I subunit 3 family. NDH-1 is composed of 13 different subunits. Subunits NuoA, H, J, K, L, M, N constitute the membrane sector of the complex.

Its subcellular location is the cell inner membrane. It carries out the reaction a quinone + NADH + 5 H(+)(in) = a quinol + NAD(+) + 4 H(+)(out). Its function is as follows. NDH-1 shuttles electrons from NADH, via FMN and iron-sulfur (Fe-S) centers, to quinones in the respiratory chain. The immediate electron acceptor for the enzyme in this species is believed to be ubiquinone. Couples the redox reaction to proton translocation (for every two electrons transferred, four hydrogen ions are translocated across the cytoplasmic membrane), and thus conserves the redox energy in a proton gradient. In Yersinia enterocolitica serotype O:8 / biotype 1B (strain NCTC 13174 / 8081), this protein is NADH-quinone oxidoreductase subunit A.